The chain runs to 200 residues: Ras-related protein RHN1 (200 aa).

GTP-binding positions include 17-25 (GDMGAGKSS), 36-42 (LEFQEST), 65-69 (DTAGQ), 123-126 (NKAD), and 153-155 (SAK). An Effector region motif is present at residues 39–47 (QESTIGAAF). Residues Cys198 and Cys199 are each lipidated (S-geranylgeranyl cysteine).

Belongs to the small GTPase superfamily. Rab family. As to expression, high in stem, root, and inflorescence.

The protein localises to the cell membrane. Protein transport. Probably involved in vesicular traffic. This Nicotiana plumbaginifolia (Leadwort-leaved tobacco) protein is Ras-related protein RHN1 (RHN1).